Here is a 590-residue protein sequence, read N- to C-terminus: MKMSEVPRIKVFRPTWEEFKDFPKYVAYMESQGAHKAGLAKVVPPPEWVPRRSGYADLDALNVTIPAPICQVVTGKQGYYQQINIQKKPLTVKQFSELASTERYATPKHFDFEDLERKYWKNITYVAPIYGADVSGSITDTDQDSWNINRLGTILDYVNKDYNIQIDGVNTAYLYFGMWKTTFAWHTEDMDLYSINYLHFGAPKTWYVVPPECGRKLEKVANQYFPASYKNCNAYLRHKMTLISPQILKQHDVPVSKITQEAGEIMITFPFGYHAGFNHGFNCAESTNFAMERWIEYGKRAVQCTCSNDMVKISMDTFVKRFQSDRYDLWMEGRDVGRHPEDPPNAVLSAAPLPPHLDVLLCDKKMKKQCNPTKAKSFKERNPDLDLDEIQQNPNVPDDVKAMLKESVLTLDTGDLATDEADFPNEDAMSLQSPANLKTKQELLEYIDDGTEDDDEEEDFKRRKQKRRYDADYDDDWLASKRKTNSRNNRGRSPRTKDDRSISPASSTSSTSRGARRGKASGTPRKTPARRKKDSITTSPAVSSAATAVKTPTSAVVAGTTSIATTTTPPADGGGGESSSLGSHCTTASP.

The JmjN domain occupies 9-51 (IKVFRPTWEEFKDFPKYVAYMESQGAHKAGLAKVVPPPEWVPR). Position 130 (tyrosine 130) interacts with 2-oxoglutarate. The JmjC domain maps to 140–306 (DTDQDSWNIN…YGKRAVQCTC (167 aa)). Histidine 186 and glutamate 188 together coordinate Fe cation. 2-oxoglutarate is bound by residues asparagine 196 and lysine 204. Residues cysteine 232 and histidine 238 each coordinate Zn(2+). Lysine 239 is a 2-oxoglutarate binding site. A Fe cation-binding site is contributed by histidine 274. Residues cysteine 304 and cysteine 306 each coordinate Zn(2+). Disordered regions lie at residues 372-395 (PTKA…QNPN) and 417-590 (ATDE…TASP). Positions 445 to 458 (EYIDDGTEDDDEEE) are enriched in acidic residues. Positions 480 to 494 (SKRKTNSRNNRGRSP) are enriched in basic residues. 2 stretches are compositionally biased toward low complexity: residues 502–513 (ISPASSTSSTSR) and 537–571 (TTSP…TPPA).

Belongs to the JHDM3 histone demethylase family. The cofactor is Fe(2+).

It is found in the nucleus. It catalyses the reaction N(6),N(6),N(6)-trimethyl-L-lysyl(9)-[histone H3] + 2 2-oxoglutarate + 2 O2 = N(6)-methyl-L-lysyl(9)-[histone H3] + 2 formaldehyde + 2 succinate + 2 CO2. Functionally, probable histone demethylase that specifically demethylates 'Lys-9' and 'Lys-36' residues of histone H3, thereby playing a central role in histone code. Demethylation of Lys residue generates formaldehyde and succinate. This chain is Probable lysine-specific demethylase 4B (Kdm4B), found in Drosophila melanogaster (Fruit fly).